The following is a 649-amino-acid chain: Transmembrane and coiled-coil domains protein 1 (649 aa).

Position 1 is an N-acetylmethionine (M1). Disordered regions lie at residues 1–37, 58–83, 110–166, and 197–222; these read MEPS…LSKM, HQRR…EVDL, RVPP…PTSS, and LAQT…GIPD. Residues 1 to 587 are Cytoplasmic-facing; it reads MEPSGSEQLY…ARNLLGKLIN (587 aa). The segment covering 20-34 has biased composition (basic and acidic residues); sequence QDAEARRQTESEQKL. A compositionally biased stretch (polar residues) spans 64-75; the sequence is SVSPHDVQQIQT. The span at 113 to 125 shows a compositional bias: basic residues; sequence PKMKRGTSLHSRR. The span at 156-166 shows a compositional bias: low complexity; the sequence is SSSTTDAPTSS. Over residues 197-214 the composition is skewed to polar residues; sequence LAQTSSAVASSTDGSIHT. The stretch at 224–310 forms a coiled coil; sequence QRTKAAIAHL…KLREVEQNGI (87 aa). Phosphoserine is present on residues S378 and S410. Positions 411–433 are disordered; the sequence is PKYGSEEDCSSATSGSVGANSTT. A compositionally biased stretch (polar residues) spans 420–433; it reads SSATSGSVGANSTT. Residues 457–566 adopt a coiled-coil conformation; sequence ALLHEVQEIR…KMELQQQQQQ (110 aa). The next 2 helical transmembrane spans lie at 588-608 and 621-641; these read ILLA…NCVV and LFLV…FSYV. Residues 642–649 lie on the Cytoplasmic side of the membrane; sequence DRLFSPPR.

The protein belongs to the TEX28 family. May form homodimers and heterodimers with TMCC2 or TMCC3 via the coiled-coil domains. Interacts with ribosomal proteins RPL4 and RPS6.

The protein localises to the endoplasmic reticulum membrane. Its function is as follows. Endoplasmic reticulum membrane protein that promotes endoplasmic reticulum-associated endosome fission. Localizes to contact sites between the endoplasmic reticulum and endosomes and acts by promoting recruitment of the endoplasmic reticulum to endosome tubules for fission. Endosome membrane fission of early and late endosomes is essential to separate regions destined for lysosomal degradation from carriers to be recycled to the plasma membrane. This is Transmembrane and coiled-coil domains protein 1 (Tmcc1) from Mus musculus (Mouse).